A 112-amino-acid chain; its full sequence is Urease subunit beta (112 aa).

It belongs to the urease beta subunit family. Heterotrimer of UreA (gamma), UreB (beta) and UreC (alpha) subunits. Three heterotrimers associate to form the active enzyme.

It is found in the cytoplasm. It catalyses the reaction urea + 2 H2O + H(+) = hydrogencarbonate + 2 NH4(+). Its pathway is nitrogen metabolism; urea degradation; CO(2) and NH(3) from urea (urease route): step 1/1. This chain is Urease subunit beta, found in Thioalkalivibrio sulfidiphilus (strain HL-EbGR7).